Reading from the N-terminus, the 110-residue chain is Large ribosomal subunit protein uL22 (110 aa).

It belongs to the universal ribosomal protein uL22 family. Part of the 50S ribosomal subunit.

Functionally, this protein binds specifically to 23S rRNA; its binding is stimulated by other ribosomal proteins, e.g. L4, L17, and L20. It is important during the early stages of 50S assembly. It makes multiple contacts with different domains of the 23S rRNA in the assembled 50S subunit and ribosome. In terms of biological role, the globular domain of the protein is located near the polypeptide exit tunnel on the outside of the subunit, while an extended beta-hairpin is found that lines the wall of the exit tunnel in the center of the 70S ribosome. The sequence is that of Large ribosomal subunit protein uL22 from Variovorax paradoxus (strain S110).